We begin with the raw amino-acid sequence, 821 residues long: Ent-isokaur-15-ene synthase (821 aa).

Mg(2+) is bound by residues Asp-556, Asp-560, Asn-701, Thr-705, and Glu-709. The DDXXD motif signature appears at 556 to 560 (DDFFD).

It belongs to the terpene synthase family. The cofactor is Mg(2+).

The catalysed reaction is ent-copalyl diphosphate = ent-isokaurene + diphosphate. It participates in secondary metabolite biosynthesis; terpenoid biosynthesis. Its function is as follows. Involved in the biosynthesis of ent-kaurene diterpenoids natural products. Catalyzes the conversion of ent-copalyl diphosphate to the phytoalexin precursor ent-isokaur-15-ene. The sequence is that of Ent-isokaur-15-ene synthase from Oryza sativa subsp. indica (Rice).